We begin with the raw amino-acid sequence, 161 residues long: uncharacterized protein (161 aa).

As to quaternary structure, interacts with ribosomes.

This is an uncharacterized protein from Saccharomyces cerevisiae (strain ATCC 204508 / S288c) (Baker's yeast).